A 622-amino-acid chain; its full sequence is DNA mismatch repair protein MutL (622 aa).

The protein belongs to the DNA mismatch repair MutL/HexB family.

This protein is involved in the repair of mismatches in DNA. It is required for dam-dependent methyl-directed DNA mismatch repair. May act as a 'molecular matchmaker', a protein that promotes the formation of a stable complex between two or more DNA-binding proteins in an ATP-dependent manner without itself being part of a final effector complex. The sequence is that of DNA mismatch repair protein MutL from Phenylobacterium zucineum (strain HLK1).